A 152-amino-acid chain; its full sequence is Large ribosomal subunit protein bL9 (152 aa).

The protein belongs to the bacterial ribosomal protein bL9 family.

In terms of biological role, binds to the 23S rRNA. In Streptococcus thermophilus (strain CNRZ 1066), this protein is Large ribosomal subunit protein bL9.